We begin with the raw amino-acid sequence, 829 residues long: Venom phosphodiesterase CdcPDE (829 aa).

SMB domains follow at residues 8–51 (PQVS…VLPT) and 52–96 (QSWS…GETS). Cystine bridges form between Cys-12/Cys-16, Cys-12/Cys-29, Cys-16/Cys-47, Cys-27/Cys-29, Cys-27/Cys-40, Cys-33/Cys-39, Cys-40/Cys-47, Cys-56/Cys-61, Cys-56/Cys-73, Cys-61/Cys-91, Cys-71/Cys-73, Cys-71/Cys-84, Cys-77/Cys-83, Cys-84/Cys-91, Cys-102/Cys-148, and Cys-110/Cys-322. Asn-17 is a glycosylation site (N-linked (GlcNAc...) asparagine). The Cell attachment site motif lies at 36–38 (RQA). A divalent metal cation is bound by residues Asp-125 and Thr-163. The AMP-threonine intermediate role is filled by Thr-163. Residues Asn-194 and Asn-237 are each glycosylated (N-linked (GlcNAc...) asparagine). Lys-249 contributes to the AMP binding site. 4 residues coordinate a divalent metal cation: Asp-283, His-287, Asp-330, and His-331. His-287 provides a ligand contact to AMP. Cystine bridges form between Cys-338–Cys-435, Cys-386–Cys-771, Cys-519–Cys-577, Cys-532–Cys-632, Cys-534–Cys-617, and Cys-740–Cys-750. Asn-383 is a glycosylation site (N-linked (GlcNAc...) asparagine). A divalent metal cation is bound at residue His-440. N-linked (GlcNAc...) asparagine glycosylation is found at Asn-572 and Asn-652.

It belongs to the nucleotide pyrophosphatase/phosphodiesterase family. In terms of assembly, monomer. It depends on a divalent metal cation as a cofactor. N-glycosylated. Glycosylation counts for an increased mass of ~9%. Post-translationally, contains 16 disulfide bonds. In terms of tissue distribution, expressed by venom gland.

The protein resides in the secreted. The enzyme catalyses ADP + H2O = AMP + phosphate + H(+). Functionally, hydrolyzes ADP with high activity. Shows weak or no activity on 5'-AMP, 5'-GMP, 3'-AMP, ATP, cAMP, and cGMP. Is devoid of monophosphatase and proteinase activities. Inhibits ADP-induced platelet aggregation and is cytotoxic to human keratinocytes. Kinetic parameters indicated a higher affinity for the substrate bis(p-nitrophenyl) phosphate compared to others snake venom PDEs. Is recognized by the crotalid antivenom produced by the Instituto Butantan. The sequence is that of Venom phosphodiesterase CdcPDE from Crotalus durissus collilineatus (Brazilian rattlesnake).